The chain runs to 130 residues: C-type natriuretic peptide 2 (130 aa).

A signal peptide spans 1–22; the sequence is MAASSSSFVPLVLLFLAIPVEP. Positions 23–103 are excised as a propeptide; that stretch reads RPSMTRDEAQ…LQQQSKTTRR (81 aa). The disordered stretch occupies residues 57-77; the sequence is ELLPRRPGPPRSFGASPGALR. Cysteines 114 and 130 form a disulfide.

It belongs to the natriuretic peptide family.

The protein localises to the secreted. In terms of biological role, exhibits natriuretic and vasodepressant activity. Has cGMP-stimulating activity. May help to regulate body fluid homeostasis in a variety of aquatic environments. The polypeptide is C-type natriuretic peptide 2 (Takifugu rubripes (Japanese pufferfish)).